Here is a 320-residue protein sequence, read N- to C-terminus: ATP-dependent 6-phosphofructokinase (320 aa).

ATP is bound at residue G12. ADP is bound by residues 22–26 and 55–60; these read RGVVR and RYSVSD. Residues 73–74 and 103–106 contribute to the ATP site; these read RF and GDGS. Mg(2+) is bound at residue D104. Substrate is bound at residue 126–128; sequence TID. D128 (proton acceptor) is an active-site residue. R155 is an ADP binding site. Substrate contacts are provided by residues R163 and 170–172; that span reads MGR. ADP is bound by residues 186-188, K212, and 214-216; these read GCE and KKH. Residues E223, R244, and 250 to 253 contribute to the substrate site; that span reads HIQR.

The protein belongs to the phosphofructokinase type A (PFKA) family. ATP-dependent PFK group I subfamily. Prokaryotic clade 'B1' sub-subfamily. Homotetramer. It depends on Mg(2+) as a cofactor.

It is found in the cytoplasm. It carries out the reaction beta-D-fructose 6-phosphate + ATP = beta-D-fructose 1,6-bisphosphate + ADP + H(+). It participates in carbohydrate degradation; glycolysis; D-glyceraldehyde 3-phosphate and glycerone phosphate from D-glucose: step 3/4. Allosterically activated by ADP and other diphosphonucleosides, and allosterically inhibited by phosphoenolpyruvate. Its function is as follows. Catalyzes the phosphorylation of D-fructose 6-phosphate to fructose 1,6-bisphosphate by ATP, the first committing step of glycolysis. This Erwinia tasmaniensis (strain DSM 17950 / CFBP 7177 / CIP 109463 / NCPPB 4357 / Et1/99) protein is ATP-dependent 6-phosphofructokinase.